Reading from the N-terminus, the 454-residue chain is Pup--protein ligase (454 aa).

Residue Glu-9 coordinates Mg(2+). ATP is bound at residue Arg-53. Mg(2+) is bound at residue Tyr-55. Asp-57 functions as the Proton acceptor in the catalytic mechanism. Residue Glu-63 participates in Mg(2+) binding. ATP-binding residues include Thr-66 and Trp-420.

The protein belongs to the Pup ligase/Pup deamidase family. Pup-conjugating enzyme subfamily.

It carries out the reaction ATP + [prokaryotic ubiquitin-like protein]-L-glutamate + [protein]-L-lysine = ADP + phosphate + N(6)-([prokaryotic ubiquitin-like protein]-gamma-L-glutamyl)-[protein]-L-lysine.. Its pathway is protein degradation; proteasomal Pup-dependent pathway. The protein operates within protein modification; protein pupylation. Functionally, catalyzes the covalent attachment of the prokaryotic ubiquitin-like protein modifier Pup to the proteasomal substrate proteins, thereby targeting them for proteasomal degradation. This tagging system is termed pupylation. The ligation reaction involves the side-chain carboxylate of the C-terminal glutamate of Pup and the side-chain amino group of a substrate lysine. The sequence is that of Pup--protein ligase from Paenarthrobacter aurescens (strain TC1).